A 597-amino-acid chain; its full sequence is MSHEGSRQARDRGVTRSKAEKARPPTQPVPQVDIVPGRLNEAEWIAFMSLEEGEDIVGDILADLVTRVMECAFKVYLTQQCVPFTISQAREAMLQITEWRFLARDEGESAVAEDPTWGEDEEPLACTTDAWAQGSVPVLHAPAPVGVEEHFHNEEPGNPDQFLIDSSWLGRESQEPTQSSEPSAEPRVNPRPTPAMEVFEEAEPRDALEVPHRQESILTVPSKESLRPTLEVQTVHSPQLSPKLSQVVSLQTCERTGSSFGSHLSLQDLYHCVPQPDAAGDRLNLKNKGQLCRSSIGSADRSLLSVPTPDGPSPFLQPGGMERRPSHKTPTMRLDPSRLPRHWVRPVAEVLIPDLEARPLEIYRVRPRKSQVGASASESQALGSRTHSKLQVSIPRFPLKRCATFRSSGPDPTLNLAQSSPSFGSNLPFLSPGFRFLARNLVPPDVASAPSPKLWPRAKWPSGWEREAEQLGELWAGRTRVPPQGQEPVEDSVSEDSGWPLAVPQVLEATSQVLWKPMVISENMKLVPGVSMWNRGTQELLNPAAIQEEAEEGTPQAPEQQPIQTGVSKPQVIMKQLRNETPKAWLLPTKPVPHSGS.

The span at 1–23 shows a compositional bias: basic and acidic residues; the sequence is MSHEGSRQARDRGVTRSKAEKAR. Disordered regions lie at residues 1 to 32 and 171 to 192; these read MSHEGSRQARDRGVTRSKAEKARPPTQPVPQV and RESQEPTQSSEPSAEPRVNPRP. The span at 175–186 shows a compositional bias: low complexity; that stretch reads EPTQSSEPSAEP. Ser237 and Ser241 each carry phosphoserine. Disordered regions lie at residues 302–335 and 549–569; these read SLLSVPTPDGPSPFLQPGGMERRPSHKTPTMRLD and EAEEGTPQAPEQQPIQTGVSK. The span at 557-568 shows a compositional bias: polar residues; sequence APEQQPIQTGVS.

This is an uncharacterized protein from Rattus norvegicus (Rat).